We begin with the raw amino-acid sequence, 847 residues long: DNA ligase (847 aa).

Over residues 1–22 (MSDTTTGSDAADAAVPATTPAD) the composition is skewed to low complexity. Positions 1–23 (MSDTTTGSDAADAAVPATTPADL) are disordered. Residues 54–58 (DAEYD), 104–105 (SL), and Glu135 contribute to the NAD(+) site. The active-site N6-AMP-lysine intermediate is Lys137. NAD(+) contacts are provided by Arg158, Glu195, Lys326, and Lys350. Residues Cys444, Cys447, Cys463, and Cys469 each coordinate Zn(2+). In terms of domain architecture, BRCT spans 686-775 (AAGGVLAGLA…PDAIALPEAD (90 aa)). Residues 770 to 847 (ALPEADPVPD…AEPDGPAETP (78 aa)) form a disordered region. Composition is skewed to low complexity over residues 786-807 (DGGS…ATAE) and 819-833 (PAAA…VEAG).

The protein belongs to the NAD-dependent DNA ligase family. LigA subfamily. Requires Mg(2+) as cofactor. Mn(2+) serves as cofactor.

It carries out the reaction NAD(+) + (deoxyribonucleotide)n-3'-hydroxyl + 5'-phospho-(deoxyribonucleotide)m = (deoxyribonucleotide)n+m + AMP + beta-nicotinamide D-nucleotide.. Its function is as follows. DNA ligase that catalyzes the formation of phosphodiester linkages between 5'-phosphoryl and 3'-hydroxyl groups in double-stranded DNA using NAD as a coenzyme and as the energy source for the reaction. It is essential for DNA replication and repair of damaged DNA. This is DNA ligase from Clavibacter sepedonicus (Clavibacter michiganensis subsp. sepedonicus).